The following is a 696-amino-acid chain: D-(-)-3-hydroxybutyrate oligomer hydrolase (696 aa).

An N-terminal signal peptide occupies residues 1-26 (MDTHGWGSRILVGAALAALTMLGACN). The active-site Charge relay system is Ser309.

This sequence belongs to the D-(-)-3-hydroxybutyrate oligomer hydrolase family.

It is found in the secreted. The enzyme catalyses (3R)-hydroxybutanoate dimer + H2O = 2 (R)-3-hydroxybutanoate + H(+). Its pathway is lipid metabolism; butanoate metabolism. In terms of biological role, participates in the degradation of poly-3-hydroxybutyrate (PHB). It works downstream of poly(3-hydroxybutyrate) depolymerase, hydrolyzing D(-)-3-hydroxybutyrate oligomers of various length (3HB-oligomers) into 3HB-monomers. This Burkholderia vietnamiensis (strain G4 / LMG 22486) (Burkholderia cepacia (strain R1808)) protein is D-(-)-3-hydroxybutyrate oligomer hydrolase.